A 212-amino-acid polypeptide reads, in one-letter code: Pyridoxine/pyridoxamine 5'-phosphate oxidase (212 aa).

Residues 8–11 and K66 each bind substrate; that span reads RREY. Residues 61 to 66, 76 to 77, R82, K83, and Q105 contribute to the FMN site; these read RIVLLK and FT. The substrate site is built by Y123, R127, and S131. FMN-binding positions include 140–141 and W185; that span reads QS. 191 to 193 lines the substrate pocket; sequence RLH. FMN is bound at residue R195.

It belongs to the pyridoxamine 5'-phosphate oxidase family. Homodimer. FMN serves as cofactor.

The catalysed reaction is pyridoxamine 5'-phosphate + O2 + H2O = pyridoxal 5'-phosphate + H2O2 + NH4(+). It catalyses the reaction pyridoxine 5'-phosphate + O2 = pyridoxal 5'-phosphate + H2O2. It participates in cofactor metabolism; pyridoxal 5'-phosphate salvage; pyridoxal 5'-phosphate from pyridoxamine 5'-phosphate: step 1/1. The protein operates within cofactor metabolism; pyridoxal 5'-phosphate salvage; pyridoxal 5'-phosphate from pyridoxine 5'-phosphate: step 1/1. Its function is as follows. Catalyzes the oxidation of either pyridoxine 5'-phosphate (PNP) or pyridoxamine 5'-phosphate (PMP) into pyridoxal 5'-phosphate (PLP). The chain is Pyridoxine/pyridoxamine 5'-phosphate oxidase from Shewanella sp. (strain MR-7).